Reading from the N-terminus, the 119-residue chain is Protein phosphatase EYA4 (119 aa).

Belongs to the HAD-like hydrolase superfamily. EYA family. It depends on Mg(2+) as a cofactor.

Its subcellular location is the cytoplasm. The protein resides in the nucleus. It carries out the reaction O-phospho-L-tyrosyl-[protein] + H2O = L-tyrosyl-[protein] + phosphate. In terms of biological role, tyrosine phosphatase that specifically dephosphorylates 'Tyr-142' of histone H2AX (H2AXY142ph). 'Tyr-142' phosphorylation of histone H2AX plays a central role in DNA repair and acts as a mark that distinguishes between apoptotic and repair responses to genotoxic stress. Promotes efficient DNA repair by dephosphorylating H2AX, promoting the recruitment of DNA repair complexes containing MDC1. Its function as histone phosphatase probably explains its role in transcription regulation during organogenesis. May be involved in development of the eye. This is Protein phosphatase EYA4 (eya4) from Takifugu rubripes (Japanese pufferfish).